The following is a 173-amino-acid chain: Shikimate kinase 2 (173 aa).

Residue 12 to 17 (GCGKTT) participates in ATP binding. Residues T16 and D32 each coordinate Mg(2+). D34, R58, and G79 together coordinate substrate. The segment at 112-126 (EENPQDNQRPTLTGR) is LID domain. Residue R120 coordinates ATP. R139 serves as a coordination point for substrate. Residue Q155 coordinates ATP.

This sequence belongs to the shikimate kinase family. AroL subfamily. As to quaternary structure, monomer. Requires Mg(2+) as cofactor.

The protein localises to the cytoplasm. It catalyses the reaction shikimate + ATP = 3-phosphoshikimate + ADP + H(+). It functions in the pathway metabolic intermediate biosynthesis; chorismate biosynthesis; chorismate from D-erythrose 4-phosphate and phosphoenolpyruvate: step 5/7. Functionally, catalyzes the specific phosphorylation of the 3-hydroxyl group of shikimic acid using ATP as a cosubstrate. This chain is Shikimate kinase 2, found in Pectobacterium atrosepticum (strain SCRI 1043 / ATCC BAA-672) (Erwinia carotovora subsp. atroseptica).